A 206-amino-acid polypeptide reads, in one-letter code: Heterochromatin protein 1 (206 aa).

2 disordered regions span residues 1 to 24 (MGKK…EEEY) and 47 to 145 (GYPE…GFDR). Ser11 and Ser15 each carry phosphoserine. The region spanning 24-82 (YAVEKIIDRRVRKGKVEYYLKWKGYPETENTWEPENNLDCQDLIQQYEASRKDEEKSAA) is the Chromo 1 domain. Low complexity predominate over residues 50–60 (ETENTWEPENN). Positions 72–98 (ASRKDEEKSAASKKDRPSSSAKAKETQ) are enriched in basic and acidic residues. Residues 95–206 (KETQGRASSS…RLSWYSDNED (112 aa)) form a binds to Su(var)39 region. Phosphoserine occurs at positions 102, 103, and 113. Residues Thr127, Thr128, and Thr134 each carry the phosphothreonine modification. The region spanning 147-205 (LEAEKILGASDNNGRLTFLIQFKGVDQAEMVPSSVANEKIPRMVIHFYEERLSWYSDNE) is the Chromo 2 domain.

In terms of assembly, homodimer. Probably associates with Su(var)3-9. Interacts with Mcm10. Interacts (via chromoshadow domain) with piwi (via N-terminal region). Interacts with Rrp6. Associates with and may be part of the HipHop-HOAP telomere capping complex but is not required for its stability or telomere localization. Interacts (via the chromo domain 2 (chromoshadow domain) and the hinge region between chromo domains 1 and 2) with cav/HOAP (via C-terminus); the interaction is direct. Each molecule of cav/HOAP interacts with 2 molecules of Su(var)205/HP1. Interacts with HipHop (via N-terminus). Interacts with moi/modigliani; the interaction is direct. Interacts (via chromo domain 1) with His3/histone 3 (via N-terminal tail methylated at 'Lys-10'); the interaction is direct. In terms of tissue distribution, salivary gland (at protein level).

It is found in the nucleus. The protein localises to the nucleoplasm. The protein resides in the chromosome. It localises to the telomere. Its function is as follows. Structural component of heterochromatin, involved in gene repression and the modification of position-effect-variegation. Recognizes and binds histone H3 tails methylated at 'Lys-9', leading to epigenetic repression. Stabilizes chromatin-associated RNAs probably by binding to them and thereby preventing their degradation. Associates with, and may be a part of, the HipHop-HOAP complex that recruits the MTV complex to form the terminin telomere-capping complex, which binds to chromosome ends in a sequence-independent manner and prevents telomere fusion. Telomere capping is independent of the origin recognition complex (ORC). In Drosophila melanogaster (Fruit fly), this protein is Heterochromatin protein 1.